We begin with the raw amino-acid sequence, 595 residues long: DNA-binding protein REB1 (595 aa).

2 stretches are compositionally biased toward basic and acidic residues: residues 25 to 46 (KSGE…KEQD) and 54 to 71 (DPGR…RDAN). The interval 25–208 (KSGEDDAVNK…IDDHVDDVSV (184 aa)) is disordered. Residues 75–84 (AVAAAAVAAA) show a composition bias toward low complexity. Positions 114–123 (KKSKKNKNKL) are enriched in basic residues. Residues 163 to 176 (NIASQHPDFQQYLN) are compositionally biased toward polar residues. Positions 182-205 (EPKKEKSEERSYGDLSNIDDHVDD) are enriched in basic and acidic residues. An HTH myb-type domain is found at 333-384 (HIFEQRGKWTPEEDAELARWCAEKEGQWSNIGKVLGRMPEDCRDRWRNYVKC). The segment at residues 360 to 382 (WSNIGKVLGRMPEDCRDRWRNYV) is a DNA-binding region (H-T-H motif). The Myb-like domain occupies 385-490 (GPNRAANKWS…QCRYKWNKLL (106 aa)). Positions 414–456 (TAYEDGEDDEMKDSSTKIEDSGDADMLDVQDSDKKPSISNSKK) are disordered. A compositionally biased stretch (acidic residues) spans 434 to 443 (SGDADMLDVQ).

Its subcellular location is the nucleus. Its function is as follows. DNA-binding protein that recognizes sites within both the enhancer and the promoter of rRNA transcription, as well as upstream of many genes transcribed by RNA polymerase II. It is essential for cell growth. May stimulate or inhibit transcription. Specifically recognizes the sequence 5'-CCGGGTA-3' or 5'-CGGGTRR-3' (where R is any purine). This chain is DNA-binding protein REB1 (REB1), found in Kluyveromyces lactis (strain ATCC 8585 / CBS 2359 / DSM 70799 / NBRC 1267 / NRRL Y-1140 / WM37) (Yeast).